A 677-amino-acid polypeptide reads, in one-letter code: Epithelial splicing regulatory protein 1 (677 aa).

RRM domains follow at residues threonine 225–glycine 302, valine 326–alanine 406, and aspartate 445–alanine 525. Phosphoserine is present on serine 543. Omega-N-methylarginine is present on arginine 578.

It belongs to the ESRP family.

It localises to the nucleus. MRNA splicing factor that regulates the formation of epithelial cell-specific isoforms. Specifically regulates the expression of FGFR2-IIIb, an epithelial cell-specific isoform of FGFR2. Also regulates the splicing of CD44, CTNND1, ENAH, 3 transcripts that undergo changes in splicing during the epithelial-to-mesenchymal transition (EMT). Acts by directly binding specific sequences in mRNAs. Binds the GU-rich sequence motifs in the ISE/ISS-3, a cis-element regulatory region present in the mRNA of FGFR2. Regulates splicing and expression of genes involved in inner ear development, auditory hair cell differentiation, and cell fate specification in the cochlear epithelium. This Rattus norvegicus (Rat) protein is Epithelial splicing regulatory protein 1 (Esrp1).